The chain runs to 264 residues: S-adenosylmethionine decarboxylase proenzyme (264 aa).

S113 (schiff-base intermediate with substrate; via pyruvic acid) is an active-site residue. S113 carries the post-translational modification Pyruvic acid (Ser); by autocatalysis. The Proton acceptor; for processing activity role is filled by H118. C141 serves as the catalytic Proton donor; for catalytic activity.

This sequence belongs to the prokaryotic AdoMetDC family. Type 2 subfamily. In terms of assembly, heterooctamer of four alpha and four beta chains arranged as a tetramer of alpha/beta heterodimers. Pyruvate serves as cofactor. Post-translationally, is synthesized initially as an inactive proenzyme. Formation of the active enzyme involves a self-maturation process in which the active site pyruvoyl group is generated from an internal serine residue via an autocatalytic post-translational modification. Two non-identical subunits are generated from the proenzyme in this reaction, and the pyruvate is formed at the N-terminus of the alpha chain, which is derived from the carboxyl end of the proenzyme. The post-translation cleavage follows an unusual pathway, termed non-hydrolytic serinolysis, in which the side chain hydroxyl group of the serine supplies its oxygen atom to form the C-terminus of the beta chain, while the remainder of the serine residue undergoes an oxidative deamination to produce ammonia and the pyruvoyl group blocking the N-terminus of the alpha chain.

The catalysed reaction is S-adenosyl-L-methionine + H(+) = S-adenosyl 3-(methylsulfanyl)propylamine + CO2. Its pathway is amine and polyamine biosynthesis; S-adenosylmethioninamine biosynthesis; S-adenosylmethioninamine from S-adenosyl-L-methionine: step 1/1. Its function is as follows. Catalyzes the decarboxylation of S-adenosylmethionine to S-adenosylmethioninamine (dcAdoMet), the propylamine donor required for the synthesis of the polyamines spermine and spermidine from the diamine putrescine. The sequence is that of S-adenosylmethionine decarboxylase proenzyme from Hahella chejuensis (strain KCTC 2396).